The primary structure comprises 220 residues: UPF0319 protein YccT (220 aa).

A signal peptide spans 1 to 20; that stretch reads MKTGIVTTLIALCLPVSVFA.

It belongs to the UPF0319 family.

The protein is UPF0319 protein YccT of Escherichia coli O139:H28 (strain E24377A / ETEC).